Here is a 432-residue protein sequence, read N- to C-terminus: uncharacterized protein (432 aa).

12 helical membrane-spanning segments follow: residues 35 to 55 (VARV…VIYL), 60 to 80 (LPPA…IATG), 112 to 132 (VAGM…PLWS), 144 to 164 (VGLL…LGAL), 185 to 205 (LAVA…LWAA), 209 to 229 (AVAW…ASLL), 242 to 262 (AHSI…PVLL), 274 to 294 (GAVI…LSAM), 313 to 333 (LIAP…AAGL), 359 to 379 (AAAV…AAAL), 384 to 404 (LLGW…PMPL), and 408 to 428 (TVIA…AALA).

The protein to M.tuberculosis Rv3630 and M.bovis Mb3654.

It is found in the cell membrane. This is an uncharacterized protein from Mycobacterium tuberculosis (strain CDC 1551 / Oshkosh).